A 254-amino-acid chain; its full sequence is tRNA 2'-phosphotransferase 1 (254 aa).

An N-acetylmethionine modification is found at Met1. Disordered stretches follow at residues 1-30 and 225-254; these read MNSF…DRDV and RKPL…MTQQ. A compositionally biased stretch (basic and acidic residues) spans 233 to 244; sequence NEEKEHQRDSKH.

It belongs to the KptA/TPT1 family.

It carries out the reaction 2'-phospho-[ligated tRNA] + NAD(+) = mature tRNA + ADP-alpha-D-ribose 1'',2''-cyclic phosphate + nicotinamide. Functionally, catalyzes the last step of tRNA splicing, the transfer of the splice junction 2'-phosphate from ligated tRNA to NAD to produce ADP-ribose 1''-2'' cyclic phosphate. The polypeptide is tRNA 2'-phosphotransferase 1 (TRPT1) (Bos taurus (Bovine)).